The primary structure comprises 169 residues: Cell division inhibitor SulA (169 aa).

A ftsZ binding region spans residues 106–112 (ALRTGNY). The segment at 162-169 (KIHSNLYH) is lon protease binding.

It belongs to the SulA family. In terms of assembly, interacts with FtsZ. Is rapidly cleaved and degraded by the Lon protease once DNA damage is repaired.

Functionally, component of the SOS system and an inhibitor of cell division. Accumulation of SulA causes rapid cessation of cell division and the appearance of long, non-septate filaments. In the presence of GTP, binds a polymerization-competent form of FtsZ in a 1:1 ratio, thus inhibiting FtsZ polymerization and therefore preventing it from participating in the assembly of the Z ring. This mechanism prevents the premature segregation of damaged DNA to daughter cells during cell division. This is Cell division inhibitor SulA from Salmonella choleraesuis (strain SC-B67).